The chain runs to 805 residues: Sucrose synthase (805 aa).

The GT-B glycosyltransferase stretch occupies residues 275-752 (MVFNVVILSP…GLKRIQEKYT (478 aa)).

The protein belongs to the glycosyltransferase 1 family. Plant sucrose synthase subfamily.

It catalyses the reaction an NDP-alpha-D-glucose + D-fructose = a ribonucleoside 5'-diphosphate + sucrose + H(+). Functionally, sucrose-cleaving enzyme that provides UDP-glucose and fructose for various metabolic pathways. The sequence is that of Sucrose synthase from Solanum tuberosum (Potato).